Reading from the N-terminus, the 992-residue chain is Meckelin (992 aa).

A signal peptide spans 1–36 (MVTRTRPVAAMAVRSRSSSRTGTAYLLLVLCEVSWA). A cysteine-rich region spans residues 37–280 (QIFSFPFRRP…FHYIFESTAG (244 aa)). Residues 37-516 (QIFSFPFRRP…SVKYEMNQGD (480 aa)) are Extracellular-facing. Cystine bridges form between Cys-49–Cys-62, Cys-65–Cys-78, Cys-80–Cys-97, Cys-100–Cys-114, Cys-117–Cys-127, Cys-129–Cys-150, Cys-153–Cys-170, Cys-173–Cys-184, Cys-186–Cys-197, Cys-237–Cys-246, Cys-253–Cys-268, and Cys-354–Cys-375. A glycan (N-linked (GlcNAc...) asparagine) is linked at Asn-242. Residues 517 to 545 (ASVHTDIALGVLGGLAVLSSLLKTAGWKR) traverse the membrane as a helical segment. Residues 546 to 555 (RVGSPMIDLQ) are Cytoplasmic-facing. Residues 556-587 (TVMKFLLYYAGDLANVFFIITVGTGLYWLIFF) form a helical membrane-spanning segment. Topologically, residues 588–600 (KAQKSVSVLLPMP) are extracellular. The chain crosses the membrane as a helical span at residues 601–628 (VQEERFVTYVGCAFAMKALQFLHKFISQ). The Cytoplasmic portion of the chain corresponds to 629-667 (ISIDIFFIDWERPKGKVLKAVEGEGGVRSATVPVSIWRT). Residues 668–676 (YFVANEWNE) constitute an intramembrane region (helical). Residues 668–698 (YFVANEWNEIQTVRKINPLFQVLTTLFFLEV) traverse the membrane as a discontinuously helical segment. The stretch at 677-685 (IQTVRKINP) is an intramembrane region. The helical intramembrane region spans 686-698 (LFQVLTTLFFLEV). Residues 699–728 (VGFKNLALMDSSSSLSRNPSDYTAPYSRIL) are Extracellular-facing. The helical intramembrane region spans 729–754 (RYAVATAIWLVIGIIQVVFFAAFYER). Residues 729–768 (RYAVATAIWLVIGIIQVVFFAAFYERFIEDKIRQFVDLCS) form a discontinuously helical membrane-spanning segment. An intramembrane segment occupies 755–759 (FIEDK). Residues 760-768 (IRQFVDLCS) constitute an intramembrane region (helical). Residues 769 to 923 (MSNVSVFLLS…SIFYNDEGHS (155 aa)) are Cytoplasmic-facing. The helical intramembrane region spans 924–926 (FSS). Residues 924–949 (FSSVLYYGNEATLLIFDLLFFCVVDL) traverse the membrane as a discontinuously helical segment. Residues 927-933 (VLYYGNE) lie within the membrane without spanning it. Positions 934-949 (ATLLIFDLLFFCVVDL) form an intramembrane region, helical. Residues 950-954 (ACQDF) are Extracellular-facing. The chain crosses the membrane as a helical span at residues 955–982 (VLASFLTYLQQEIFRFIRNTVGQKNLAT). Residues 983–992 (KTLVDERFLI) lie on the Cytoplasmic side of the membrane.

As to quaternary structure, homodimer. Part of the tectonic-like complex (also named B9 complex). Interacts with DNAJB9, DNAJC10 and mutated SFTPC. Interacts with SYNE2 during the early establishment of cell polarity. Interacts (via C-terminus) with FLNA. Interacts with TMEM218. Interacts with WNT5A. Interacts with ROR2.

It localises to the cell membrane. Its subcellular location is the endoplasmic reticulum membrane. The protein localises to the cytoplasm. The protein resides in the cytoskeleton. It is found in the cilium basal body. Functionally, part of the tectonic-like complex which is required for tissue-specific ciliogenesis and may regulate ciliary membrane composition. Involved in centrosome migration to the apical cell surface during early ciliogenesis. Required for ciliary structure and function, including a role in regulating length and appropriate number through modulating centrosome duplication. Is a key regulator of stereociliary bundle orientation. Required for epithelial cell branching morphology. Essential for endoplasmic reticulum-associated degradation (ERAD) of surfactant protein C (sftpc). Involved in the negative regulation of canonical Wnt signaling, and activation of the non-canonical cascade stimulated by WNT5A. In non-canonical Wnt signaling, it may act as ROR2 coreceptor. The protein is Meckelin (Tmem67) of Mus musculus (Mouse).